The primary structure comprises 1049 residues: FERM, ARHGEF and pleckstrin domain-containing protein 1 (1049 aa).

Residues 1 to 37 form a disordered region; that stretch reads MGEIEQKPTPASRLGAPENSGISTLERGQKPPPTPSG. S20 and S23 each carry phosphoserine. A Phosphothreonine modification is found at T24. The FERM domain maps to 40–320; sequence MTVKIQMLDD…EHHAFFRLFE (281 aa). S340, S373, S389, S403, S427, S433, and S437 each carry phosphoserine. The segment at 361–537 is disordered; that stretch reads FERKHSKIHS…TDDEEEGRRK (177 aa). Composition is skewed to polar residues over residues 371–395 and 402–412; these read TRSL…SASL and ESPSAQSCQQA. A compositionally biased stretch (low complexity) spans 435 to 448; the sequence is SGSKAADGTAAAAP. Composition is skewed to polar residues over residues 473 to 492 and 499 to 514; these read STGS…NSQG and VTLS…QASP. S513 and S517 each carry phosphoserine. Residues 543–734 enclose the DH domain; sequence KAYYIAKEVS…TEMVAQLHGT (192 aa). Residues 763–860 enclose the PH 1 domain; that stretch reads EFIRLGSLSK…WLEDIQMAID (98 aa). 3 positions are modified to phosphoserine: S837, S876, and S882. Positions 866-908 are disordered; it reads NGPTPELLASSPPDNKSPDEATAADQESEDDLSASRTSLERQA. Phosphothreonine is present on T887. Phosphoserine occurs at positions 893, 900, and 903. The region spanning 936–1033 is the PH 2 domain; that stretch reads ENQLSGNLLR…WMEVIRSATS (98 aa).

As to quaternary structure, interacts with CADM1. Interacts with RAC1. Detected in forbrain (at protein level).

The protein localises to the cell membrane. Its subcellular location is the synapse. It is found in the synaptosome. It localises to the cytoplasm. The protein resides in the cytosol. The protein localises to the cell projection. Its subcellular location is the filopodium. It is found in the dendrite. It localises to the dendritic spine. May play a role in semaphorin signaling. Functions as a guanine nucleotide exchange factor for RAC1. Plays a role in the assembly and disassembly of dendritic filopodia, the formation of dendritic spines, regulation of dendrite length and ultimately the formation of synapses. This Rattus norvegicus (Rat) protein is FERM, ARHGEF and pleckstrin domain-containing protein 1 (Farp1).